Here is a 694-residue protein sequence, read N- to C-terminus: PTS system fructose-specific EIIABC component (694 aa).

The region spanning 4–149 (PLLSAELFFN…NGLINLIDSF (146 aa)) is the PTS EIIA type-2 domain. His68 (tele-phosphohistidine intermediate; for EIIA activity) is an active-site residue. Position 68 is a phosphohistidine; by HPr (His68). Positions 179–275 (FVAVTACPTG…PQTVYDQVVK (97 aa)) constitute a PTS EIIB type-2 domain. Cys185 functions as the Phosphocysteine intermediate; for EIIB activity in the catalytic mechanism. Cys185 carries the post-translational modification Phosphocysteine; by EIIA. The 378-residue stretch at 310–687 (IYRAILSGVS…NLLVVRKKTK (378 aa)) folds into the PTS EIIC type-2 domain. 10 helical membrane-spanning segments follow: residues 318 to 338 (VSYMLPFVVFGGILIAIAFLI), 364 to 384 (GGLSFGLIVPILSAYIAFALV), 390 to 410 (LPGFIVGLISAGKFLLNIDIV), 422 to 442 (VSSGFFGAIFGGLLAAVLIIV), 461 to 481 (ILFIPLLGTLVTAALFWVINI), 502 to 522 (LAPLLGLVIGLMMCFDLGGPV), 542 to 562 (VAMASAILSGMVPPLGIAIAA), 576 to 596 (AAYACYVMGLSFISEGAIPFV), 602 to 622 (IMLAANLIGGAVCGVLTGAFA), and 655 to 675 (GVGLALLALIVSSFISAGIII).

The protein resides in the cell membrane. It carries out the reaction D-fructose(out) + N(pros)-phospho-L-histidyl-[protein] = D-fructose 1-phosphate(in) + L-histidyl-[protein]. Functionally, the phosphoenolpyruvate-dependent sugar phosphotransferase system (sugar PTS), a major carbohydrate active transport system, catalyzes the phosphorylation of incoming sugar substrates concomitantly with their translocation across the cell membrane. This system is involved in fructose transport. In Mycoplasma pneumoniae (strain ATCC 29342 / M129 / Subtype 1) (Mycoplasmoides pneumoniae), this protein is PTS system fructose-specific EIIABC component.